Here is a 20-residue protein sequence, read N- to C-terminus: Cytochrome c oxidase subunit 5A-1, mitochondrial (20 aa).

It belongs to the cytochrome c oxidase subunit 5A family. Component of the cytochrome c oxidase (complex IV, CIV), a multisubunit enzyme composed of 14 subunits. The complex is composed of a catalytic core of 3 subunits MT-CO1, MT-CO2 and MT-CO3, encoded in the mitochondrial DNA, and 11 supernumerary subunits COX4I, COX5A, COX5B, COX6A, COX6B, COX6C, COX7A, COX7B, COX7C, COX8 and NDUFA4, which are encoded in the nuclear genome. The complex exists as a monomer or a dimer and forms supercomplexes (SCs) in the inner mitochondrial membrane with NADH-ubiquinone oxidoreductase (complex I, CI) and ubiquinol-cytochrome c oxidoreductase (cytochrome b-c1 complex, complex III, CIII), resulting in different assemblies (supercomplex SCI(1)III(2)IV(1) and megacomplex MCI(2)III(2)IV(2)). Interacts with AFG1L. Interacts with RAB5IF.

The protein localises to the mitochondrion inner membrane. It functions in the pathway energy metabolism; oxidative phosphorylation. In terms of biological role, component of the cytochrome c oxidase, the last enzyme in the mitochondrial electron transport chain which drives oxidative phosphorylation. The respiratory chain contains 3 multisubunit complexes succinate dehydrogenase (complex II, CII), ubiquinol-cytochrome c oxidoreductase (cytochrome b-c1 complex, complex III, CIII) and cytochrome c oxidase (complex IV, CIV), that cooperate to transfer electrons derived from NADH and succinate to molecular oxygen, creating an electrochemical gradient over the inner membrane that drives transmembrane transport and the ATP synthase. Cytochrome c oxidase is the component of the respiratory chain that catalyzes the reduction of oxygen to water. Electrons originating from reduced cytochrome c in the intermembrane space (IMS) are transferred via the dinuclear copper A center (CU(A)) of subunit 2 and heme A of subunit 1 to the active site in subunit 1, a binuclear center (BNC) formed by heme A3 and copper B (CU(B)). The BNC reduces molecular oxygen to 2 water molecules using 4 electrons from cytochrome c in the IMS and 4 protons from the mitochondrial matrix. This Thunnus obesus (Bigeye tuna) protein is Cytochrome c oxidase subunit 5A-1, mitochondrial.